We begin with the raw amino-acid sequence, 579 residues long: Probable receptor-like serine/threonine-protein kinase At5g57670 (579 aa).

Thr256 carries the phosphothreonine modification. The Protein kinase domain occupies Phe267–Ile542. ATP-binding positions include Val273–Val281 and Lys295. Asp392 (proton acceptor) is an active-site residue. A Phosphoserine modification is found at Ser396. At Thr432 the chain carries Phosphothreonine.

The protein belongs to the protein kinase superfamily. Ser/Thr protein kinase family.

The enzyme catalyses L-seryl-[protein] + ATP = O-phospho-L-seryl-[protein] + ADP + H(+). It carries out the reaction L-threonyl-[protein] + ATP = O-phospho-L-threonyl-[protein] + ADP + H(+). The protein is Probable receptor-like serine/threonine-protein kinase At5g57670 of Arabidopsis thaliana (Mouse-ear cress).